We begin with the raw amino-acid sequence, 249 residues long: Small ribosomal subunit protein uS2 (249 aa).

The protein belongs to the universal ribosomal protein uS2 family.

The chain is Small ribosomal subunit protein uS2 from Listeria monocytogenes serovar 1/2a (strain ATCC BAA-679 / EGD-e).